The following is a 441-amino-acid chain: ATP-dependent protease ATPase subunit HslU (441 aa).

ATP is bound by residues Ile-18, Gly-60–Glu-65, Asp-254, Glu-319, and Arg-391.

This sequence belongs to the ClpX chaperone family. HslU subfamily. A double ring-shaped homohexamer of HslV is capped on each side by a ring-shaped HslU homohexamer. The assembly of the HslU/HslV complex is dependent on binding of ATP.

Its subcellular location is the cytoplasm. Functionally, ATPase subunit of a proteasome-like degradation complex; this subunit has chaperone activity. The binding of ATP and its subsequent hydrolysis by HslU are essential for unfolding of protein substrates subsequently hydrolyzed by HslV. HslU recognizes the N-terminal part of its protein substrates and unfolds these before they are guided to HslV for hydrolysis. The chain is ATP-dependent protease ATPase subunit HslU from Shewanella woodyi (strain ATCC 51908 / MS32).